An 860-amino-acid polypeptide reads, in one-letter code: Leucine--tRNA ligase (860 aa).

Positions 42-52 match the 'HIGH' region motif; it reads PYPSGRLHMGH. Positions 619–623 match the 'KMSKS' region motif; it reads KMSKS. K622 contributes to the ATP binding site.

This sequence belongs to the class-I aminoacyl-tRNA synthetase family.

It is found in the cytoplasm. The catalysed reaction is tRNA(Leu) + L-leucine + ATP = L-leucyl-tRNA(Leu) + AMP + diphosphate. In Histophilus somni (strain 2336) (Haemophilus somnus), this protein is Leucine--tRNA ligase.